Here is a 207-residue protein sequence, read N- to C-terminus: Guanylate kinase (207 aa).

Residues 6–185 form the Guanylate kinase-like domain; it reads GLLIVLSGPS…AKNRIQSIVE (180 aa). 13–20 serves as a coordination point for ATP; it reads GPSGVGKG.

It belongs to the guanylate kinase family.

The protein resides in the cytoplasm. It carries out the reaction GMP + ATP = GDP + ADP. In terms of biological role, essential for recycling GMP and indirectly, cGMP. The chain is Guanylate kinase from Staphylococcus epidermidis (strain ATCC 12228 / FDA PCI 1200).